The primary structure comprises 353 residues: Sorbitol dehydrogenase (353 aa).

Cysteine 45 contacts Zn(2+). Residue tyrosine 51 participates in substrate binding. Positions 70 and 71 each coordinate Zn(2+). Glutamate 156 is a binding site for substrate. Residues valine 184, aspartate 204, arginine 209, 271–273 (VGL), and 296–298 (IFR) each bind NAD(+). Residues arginine 298 and tyrosine 299 each contribute to the substrate site.

The protein belongs to the zinc-containing alcohol dehydrogenase family. As to quaternary structure, homotetramer. Zn(2+) is required as a cofactor.

It catalyses the reaction keto-D-fructose + NADH + H(+) = D-sorbitol + NAD(+). The enzyme catalyses xylitol + NAD(+) = D-xylulose + NADH + H(+). It carries out the reaction L-iditol + NAD(+) = keto-L-sorbose + NADH + H(+). Polyol dehydrogenase that catalyzes the NAD(+)-dependent oxidation of various sugar alcohols. Is mostly active with D-sorbitol (D-glucitol), xylitol and L-iditol as substrates, leading to the C2-oxidized products D-fructose, D-xylulose and L-sorbose, respectively. The chain is Sorbitol dehydrogenase from Bacillus subtilis (strain 168).